Reading from the N-terminus, the 656-residue chain is Acyl-CoA-binding domain-containing protein 6 (656 aa).

One can recognise an ACB domain in the interval 8–102 (YPDRFYAAAA…LEEEDPGWYS (95 aa)). An acyl-CoA contacts are provided by residues 44-48 (YGLYQ) and K70. The tract at residues 129-148 (ASTNGTSVPEPKTISENGSS) is disordered. 6 Kelch repeats span residues 194 to 241 (KMYI…AQVS), 254 to 304 (KFFS…LVGT), 305 to 354 (TLVL…CHAD), 356 to 405 (YLLI…TVGE), 406 to 454 (NWYI…LVHS), and 461 to 507 (YLIS…EPEV). Residues 527–636 (LKKDDANELL…EQAALEAKQR (110 aa)) adopt a coiled-coil conformation. Residues 627–656 (EQAALEAKQRQSSSGMWGWLVGTPPDKSES) form a disordered region.

It belongs to the ACBP family. In terms of tissue distribution, highly expressed in leaves. Expressed in roots and seeds.

Its subcellular location is the peroxisome. In terms of biological role, binds medium- and long-chain acyl-CoA esters with high affinity. Can interact in vitro with linoleoyl-CoA and linolenoyl-CoA. Binds phosphatidic acid (PA) and phosphatidylcholine (PC) in vitro. May play a role in the biosynthesis of phospholipids. May be involved in lipid degradation via peroxisomal beta-oxydation. This is Acyl-CoA-binding domain-containing protein 6 from Oryza sativa subsp. japonica (Rice).